Reading from the N-terminus, the 582-residue chain is Aspartate--tRNA(Asp/Asn) ligase (582 aa).

Glu177 contributes to the L-aspartate binding site. Residues 201 to 204 (QLFK) are aspartate. Arg223 provides a ligand contact to L-aspartate. ATP is bound by residues 223 to 225 (RDE) and Gln232. His447 contacts L-aspartate. Glu481 contacts ATP. Arg488 is an L-aspartate binding site. Position 533-536 (533-536 (GLDR)) interacts with ATP.

Belongs to the class-II aminoacyl-tRNA synthetase family. Type 1 subfamily. As to quaternary structure, homodimer.

Its subcellular location is the cytoplasm. It carries out the reaction tRNA(Asx) + L-aspartate + ATP = L-aspartyl-tRNA(Asx) + AMP + diphosphate. Functionally, aspartyl-tRNA synthetase with relaxed tRNA specificity since it is able to aspartylate not only its cognate tRNA(Asp) but also tRNA(Asn). Reaction proceeds in two steps: L-aspartate is first activated by ATP to form Asp-AMP and then transferred to the acceptor end of tRNA(Asp/Asn). This is Aspartate--tRNA(Asp/Asn) ligase from Chlamydia muridarum (strain MoPn / Nigg).